Here is a 40-residue protein sequence, read N- to C-terminus: Photosystem II reaction center protein J (40 aa).

Residues 8 to 28 (IPLWLVGTVAGILVIGLIGIF) traverse the membrane as a helical segment.

It belongs to the PsbJ family. In terms of assembly, PSII is composed of 1 copy each of membrane proteins PsbA, PsbB, PsbC, PsbD, PsbE, PsbF, PsbH, PsbI, PsbJ, PsbK, PsbL, PsbM, PsbT, PsbX, PsbY, PsbZ, Psb30/Ycf12, at least 3 peripheral proteins of the oxygen-evolving complex and a large number of cofactors. It forms dimeric complexes.

It is found in the plastid. Its subcellular location is the chloroplast thylakoid membrane. Its function is as follows. One of the components of the core complex of photosystem II (PSII). PSII is a light-driven water:plastoquinone oxidoreductase that uses light energy to abstract electrons from H(2)O, generating O(2) and a proton gradient subsequently used for ATP formation. It consists of a core antenna complex that captures photons, and an electron transfer chain that converts photonic excitation into a charge separation. This Gnetum parvifolium (Small-leaved jointfir) protein is Photosystem II reaction center protein J.